Here is a 794-residue protein sequence, read N- to C-terminus: Protein transport protein SEC23 G (794 aa).

4 residues coordinate Zn(2+): cysteine 56, cysteine 59, cysteine 78, and cysteine 81. Residues 56–81 (CSRCGAVLNPYARVDYQSRIWSCPFC) form a zinc finger-like region.

It belongs to the SEC23/SEC24 family. SEC23 subfamily. As to quaternary structure, component of the coat protein complex II (COPII), composed of at least five proteins: the Sec23/24 complex, the Sec13/31 complex and Sar1. Interacts with SEC24A.

It localises to the cytoplasmic vesicle. The protein localises to the COPII-coated vesicle membrane. It is found in the endoplasmic reticulum membrane. Its subcellular location is the membrane. Component of the coat protein complex II (COPII) which promotes the formation of transport vesicles from the endoplasmic reticulum (ER). The coat has two main functions, the physical deformation of the endoplasmic reticulum membrane into vesicles and the selection of cargo molecules. The sequence is that of Protein transport protein SEC23 G from Arabidopsis thaliana (Mouse-ear cress).